The chain runs to 613 residues: Ethylene response sensor 1 (613 aa).

The next 3 helical transmembrane spans lie at 23–43 (ISDA…IYFV), 58–78 (FGAF…MFFM), and 95–115 (AVVS…LLSV). The Cu cation site is built by cysteine 65 and histidine 69. Residues 158 to 307 (DRHTILRTTL…NVADQVAVAL (150 aa)) form the GAF domain. One can recognise a Histidine kinase domain in the interval 350-589 (VMNHEMRTPM…SFIIRLGICN (240 aa)). Histidine 353 is modified (phosphohistidine; by autocatalysis).

This sequence belongs to the ethylene receptor family. In terms of assembly, homodimer; disulfide-linked. Heteromer with ETR1. Cu cation is required as a cofactor. Post-translationally, autophosphorylated on both His and Ser residues in the presence of manganese. Loss of His autophosphorylation in the presence of both manganese and magnesium. As to expression, expressed in etiolated seedlings, leaves, stems, roots, flowers, embryos, anthers, carpels and ovules.

It is found in the endoplasmic reticulum membrane. The catalysed reaction is ATP + protein L-histidine = ADP + protein N-phospho-L-histidine.. In terms of biological role, ethylene receptor related to bacterial two-component regulators. Acts as a redundant negative regulator of ethylene signaling. This Arabidopsis thaliana (Mouse-ear cress) protein is Ethylene response sensor 1 (ERS1).